Reading from the N-terminus, the 393-residue chain is tRNA(Met) cytidine acetate ligase (393 aa).

Positions 81, 142, and 167 each coordinate ATP.

The protein belongs to the TmcAL family.

It is found in the cytoplasm. It catalyses the reaction cytidine(34) in elongator tRNA(Met) + acetate + ATP = N(4)-acetylcytidine(34) in elongator tRNA(Met) + AMP + diphosphate. Catalyzes the formation of N(4)-acetylcytidine (ac(4)C) at the wobble position of elongator tRNA(Met), using acetate and ATP as substrates. First activates an acetate ion to form acetyladenylate (Ac-AMP) and then transfers the acetyl group to tRNA to form ac(4)C34. This chain is tRNA(Met) cytidine acetate ligase, found in Bacillus cereus (strain ZK / E33L).